The chain runs to 63 residues: Venom peptide 2a (63 aa).

A signal peptide spans 1–22 (MRGTSFILFAVVVILGFLNANA). 5 AXPX repeats span residues 22–25 (AEPL), 26–29 (ANPA), 32–35 (ANPD), 38–41 (ANPD), and 44–47 (ANPE). Residues 23 to 48 (EPLANPAPLANPDPLANPDPLANPEA) constitute a propeptide that is removed on maturation. L62 carries the post-translational modification Leucine amide.

As to expression, expressed by the venom gland.

It localises to the secreted. It is found in the target cell membrane. Antimicrobial peptide. Shows activities against Gram-positive bacteria (S.aureus MIC=50 uM and 200 ug/ml, and B.subtilis MIC=200 ug/ml), Gram-negative bacterium E.coli (MIC=100 uM and 200 ug/ml) and fungi (B.cinerea MIC=5 uM, S.cerevisiae MIC=128 ug/ml, S.pombe MIC=128 ug/ml, A.nidulans MIC=128 ug/ml, and C.albicans MIC=64-100 uM). Shows cytolytic activity against insect cell lines. Its hemolytic activity is controversial, as Baek and colleagues report no activity while Bea and colleagues note a hemolytic activity. In vivo, peptide injection in the vicinity of the head and thorax of lepidopteran larvae induces feeding disorder followed by death due to starvation. Is weakly lethal when tested on water flies (D.magna), but is not lethal on lady beetles (H.convergens). The chain is Venom peptide 2a from Eumenes pomiformis (Potter wasp).